The chain runs to 303 residues: Bifunctional protein FolD (303 aa).

NADP(+) contacts are provided by residues 169 to 171 (GRG), Thr196, and Val237.

Belongs to the tetrahydrofolate dehydrogenase/cyclohydrolase family. In terms of assembly, homodimer.

It catalyses the reaction (6R)-5,10-methylene-5,6,7,8-tetrahydrofolate + NADP(+) = (6R)-5,10-methenyltetrahydrofolate + NADPH. It carries out the reaction (6R)-5,10-methenyltetrahydrofolate + H2O = (6R)-10-formyltetrahydrofolate + H(+). Its pathway is one-carbon metabolism; tetrahydrofolate interconversion. Catalyzes the oxidation of 5,10-methylenetetrahydrofolate to 5,10-methenyltetrahydrofolate and then the hydrolysis of 5,10-methenyltetrahydrofolate to 10-formyltetrahydrofolate. This Micrococcus luteus (strain ATCC 4698 / DSM 20030 / JCM 1464 / CCM 169 / CCUG 5858 / IAM 1056 / NBRC 3333 / NCIMB 9278 / NCTC 2665 / VKM Ac-2230) (Micrococcus lysodeikticus) protein is Bifunctional protein FolD.